Here is a 95-residue protein sequence, read N- to C-terminus: Large ribosomal subunit protein uL23 (95 aa).

The protein belongs to the universal ribosomal protein uL23 family. As to quaternary structure, part of the 50S ribosomal subunit. Contacts protein L29, and trigger factor when it is bound to the ribosome.

Functionally, one of the early assembly proteins it binds 23S rRNA. One of the proteins that surrounds the polypeptide exit tunnel on the outside of the ribosome. Forms the main docking site for trigger factor binding to the ribosome. The sequence is that of Large ribosomal subunit protein uL23 from Bacillus pumilus (strain SAFR-032).